A 399-amino-acid chain; its full sequence is Elongation factor Tu (399 aa).

Residues 10–204 (KPHVNIGTIG…AVDASIPEPE (195 aa)) enclose the tr-type G domain. Residues 19-26 (GHVDHGKT) are G1. Position 19 to 26 (19 to 26 (GHVDHGKT)) interacts with GTP. Thr26 is a binding site for Mg(2+). The segment at 60–64 (GITIN) is G2. The segment at 81-84 (DCPG) is G3. GTP-binding positions include 81 to 85 (DCPGH) and 136 to 139 (NKCD). The segment at 136 to 139 (NKCD) is G4. A G5 region spans residues 174–176 (SGL).

It belongs to the TRAFAC class translation factor GTPase superfamily. Classic translation factor GTPase family. EF-Tu/EF-1A subfamily. In terms of assembly, monomer.

The protein resides in the cytoplasm. The enzyme catalyses GTP + H2O = GDP + phosphate + H(+). GTP hydrolase that promotes the GTP-dependent binding of aminoacyl-tRNA to the A-site of ribosomes during protein biosynthesis. The protein is Elongation factor Tu of Prochlorococcus marinus (strain AS9601).